The following is an 87-amino-acid chain: Defensin-A (87 aa).

An N-terminal signal peptide occupies residues Met1 to Ala19. Residues Leu20–Gln44 constitute a propeptide that is removed on maturation. Disulfide bonds link Cys57/Cys78, Cys64/Cys83, and Cys68/Cys85.

In terms of tissue distribution, hemolymph and fat body.

It is found in the secreted. Functionally, antibacterial peptide mostly active against Gram-positive and Gram negative bacteria. This chain is Defensin-A, found in Glossina morsitans morsitans (Savannah tsetse fly).